We begin with the raw amino-acid sequence, 240 residues long: UDP-2,3-diacylglucosamine hydrolase (240 aa).

Mn(2+) contacts are provided by D8, H10, D41, N78, and H113. A substrate-binding site is contributed by 78 to 79; that stretch reads NR. Substrate is bound by residues D121, S159, N163, K166, and H194. Mn(2+) contacts are provided by H194 and H196.

It belongs to the LpxH family. Requires Mn(2+) as cofactor.

The protein resides in the cell inner membrane. The enzyme catalyses UDP-2-N,3-O-bis[(3R)-3-hydroxytetradecanoyl]-alpha-D-glucosamine + H2O = 2-N,3-O-bis[(3R)-3-hydroxytetradecanoyl]-alpha-D-glucosaminyl 1-phosphate + UMP + 2 H(+). Its pathway is glycolipid biosynthesis; lipid IV(A) biosynthesis; lipid IV(A) from (3R)-3-hydroxytetradecanoyl-[acyl-carrier-protein] and UDP-N-acetyl-alpha-D-glucosamine: step 4/6. Its function is as follows. Hydrolyzes the pyrophosphate bond of UDP-2,3-diacylglucosamine to yield 2,3-diacylglucosamine 1-phosphate (lipid X) and UMP by catalyzing the attack of water at the alpha-P atom. Involved in the biosynthesis of lipid A, a phosphorylated glycolipid that anchors the lipopolysaccharide to the outer membrane of the cell. The chain is UDP-2,3-diacylglucosamine hydrolase from Shewanella baltica (strain OS155 / ATCC BAA-1091).